Reading from the N-terminus, the 243-residue chain is Cytochrome c1, heme protein (243 aa).

Residues 1–201 (GVDSHPPALP…CSNPWWDERK (201 aa)) lie on the Mitochondrial intermembrane side of the membrane. The Cytochrome c domain maps to 5–194 (HPPALPWPHF…VTCFLEWCSN (190 aa)). 3 residues coordinate heme: C39, H40, and M159. A helical membrane pass occupies residues 202–221 (LLGYKTIATLAVIAVSSGYY). The Mitochondrial matrix portion of the chain corresponds to 222-243 (NRFLSGLWRSRRLAFRPFNYSK).

It belongs to the cytochrome c family. In terms of assembly, component of the ubiquinol-cytochrome c oxidoreductase (cytochrome b-c1 complex, complex III, CIII), a multisubunit enzyme composed of 3 respiratory subunits cytochrome b, cytochrome c1 and Rieske protein, 2 core protein subunits, and additional low-molecular weight protein subunits. The complex exists as an obligatory dimer and forms supercomplexes (SCs) in the inner mitochondrial membrane with cytochrome c oxidase (complex IV, CIV). Heme serves as cofactor.

The protein resides in the mitochondrion inner membrane. The enzyme catalyses a quinol + 2 Fe(III)-[cytochrome c](out) = a quinone + 2 Fe(II)-[cytochrome c](out) + 2 H(+)(out). Its function is as follows. Component of the ubiquinol-cytochrome c oxidoreductase, a multisubunit transmembrane complex that is part of the mitochondrial electron transport chain which drives oxidative phosphorylation. The respiratory chain contains 3 multisubunit complexes succinate dehydrogenase (complex II, CII), ubiquinol-cytochrome c oxidoreductase (cytochrome b-c1 complex, complex III, CIII) and cytochrome c oxidase (complex IV, CIV), that cooperate to transfer electrons derived from NADH and succinate to molecular oxygen, creating an electrochemical gradient over the inner membrane that drives transmembrane transport and the ATP synthase. The cytochrome b-c1 complex catalyzes electron transfer from ubiquinol to cytochrome c, linking this redox reaction to translocation of protons across the mitochondrial inner membrane, with protons being carried across the membrane as hydrogens on the quinol. In the process called Q cycle, 2 protons are consumed from the matrix, 4 protons are released into the intermembrane space and 2 electrons are passed to cytochrome c. Cytochrome c1 is a catalytic core subunit containing a c-type heme. It transfers electrons from the [2Fe-2S] iron-sulfur cluster of the Rieske protein to cytochrome c. The protein is Cytochrome c1, heme protein of Euglena gracilis.